The following is a 492-amino-acid chain: Alpha/beta hydrolase ucsC (492 aa).

Residue serine 258 is the Nucleophile of the active site.

It belongs to the AB hydrolase superfamily. FUS2 hydrolase family. In terms of assembly, homodimer.

The protein operates within mycotoxin biosynthesis. Alpha/beta hydrolase; part of the gene cluster that mediates the biosynthesis of UCS1025A, a member of the pyrrolizidinone family that acts as a strong telomerase inhibitor and displays potent antibacterial and antitumor properties. These compounds share a hemiaminal-containing pyrrolizidinone core fused with a gamma-lactone, giving a furopyrrolizidine that is connected to a decalin fragment. The polyketide synthase module (PKS) of the PKS-NRPS ucsA is responsible for the synthesis of the polyketide backbone via the condensation of an acetyl-CoA starter unit with 6 malonyl-CoA units. The downstream nonribosomal peptide synthetase (NRPS) module then amidates the carboxyl end of the polyketide with a 2S,3S-methylproline derived from L-isoleucine by the 2-oxoglutarate-dependent dioxygenase ucsF which converts L-isoleucine to (4S,5S)-4-methylpyrroline-5-carboxylate that is further converted to 2S,3S-methylproline by the pyrroline-5-carboxylate reductase ucsG. Reductive release of the completed aminoacyl polyketide from the assembly line can form the 3-pyrrolin-2-one structure via an intramolecular Knoevenagel reaction. Because ucsA lacks a designated enoylreductase (ER) domain, the required activity is provided the enoyl reductase ucsL. This keto acyclic precursor is the substrate of the Diels-Alderase ucsH, that catalyzes the Diels-Alder cycloaddition. Oxidation of the 3S-methyl group to a carboxylate by the cytochrome P450 monooxygenase ucsK allows an oxa-Michael cyclization that might involve the reductase/dehydrogenase ucsI and which furnishes the furopyrrolizidine. The oxidase ucsJ likely plays a critical role in stereoselective reduction of the C5-C6 double bond to afford the required R-configured carboxylate group. Further enolization and oxidation at C5 by an unidentified enzyme affords the last intermediate that can undergo oxa-Michael cyclization to yield UCS1025A. In Acremonium sp, this protein is Alpha/beta hydrolase ucsC.